Consider the following 168-residue polypeptide: Phosphopantetheine adenylyltransferase (168 aa).

Serine 9 is a substrate binding site. Residues 9–10 (SF) and histidine 17 contribute to the ATP site. Lysine 41, leucine 73, and arginine 87 together coordinate substrate. Residues 88–90 (GLR), glutamate 98, and 123–129 (YAFLSSS) each bind ATP.

The protein belongs to the bacterial CoaD family. In terms of assembly, homohexamer. It depends on Mg(2+) as a cofactor.

It is found in the cytoplasm. It catalyses the reaction (R)-4'-phosphopantetheine + ATP + H(+) = 3'-dephospho-CoA + diphosphate. Its pathway is cofactor biosynthesis; coenzyme A biosynthesis; CoA from (R)-pantothenate: step 4/5. Functionally, reversibly transfers an adenylyl group from ATP to 4'-phosphopantetheine, yielding dephospho-CoA (dPCoA) and pyrophosphate. In Heliobacterium modesticaldum (strain ATCC 51547 / Ice1), this protein is Phosphopantetheine adenylyltransferase.